Here is a 560-residue protein sequence, read N- to C-terminus: Membrane protein insertase YidC (560 aa).

A helical membrane pass occupies residues 1-21 (MDIKRTILIAALAVVSYVMVL). Positions 42 to 66 (VAPGLPDGVPAGNNGASADVPSANA) are disordered. 5 helical membrane passes run 341 to 361 (LELT…FWLL), 367 to 387 (LLGN…GLFF), 437 to 457 (LGGC…YWVL), 468 to 488 (WMLW…PIIM), and 515 to 535 (PIIF…YWVV).

It belongs to the OXA1/ALB3/YidC family. Type 1 subfamily. As to quaternary structure, interacts with the Sec translocase complex via SecD. Specifically interacts with transmembrane segments of nascent integral membrane proteins during membrane integration.

The protein localises to the cell inner membrane. In terms of biological role, required for the insertion and/or proper folding and/or complex formation of integral membrane proteins into the membrane. Involved in integration of membrane proteins that insert both dependently and independently of the Sec translocase complex, as well as at least some lipoproteins. Aids folding of multispanning membrane proteins. This Pseudomonas putida (strain GB-1) protein is Membrane protein insertase YidC.